A 385-amino-acid polypeptide reads, in one-letter code: Cytochrome b (385 aa).

Over 1 to 27 (MAFRKSNVYLSLVNSYIIDSPQPSSIN) the chain is Mitochondrial matrix. A ubiquinone is bound at residue tyrosine 16. The chain crosses the membrane as a helical span at residues 28-51 (YWWNMGSLLGLCLVIQIVTGIFMA). The Mitochondrial intermembrane portion of the chain corresponds to 52 to 74 (MHYSSNIELAFSSVEHIMRDVHN). Residues 75–102 (GYILRYLHANGASFFFMVMFMHMAKGLY) form a helical membrane-spanning segment. Positions 82 and 96 each coordinate heme b. Residues 103–110 (YGSYRSPR) are Mitochondrial matrix-facing. A helical membrane pass occupies residues 111-135 (VTLWNVGVIIFILTIATAFLGYCCV). Residues 136 to 172 (YGQMSHWGATVITNLFSAIPFVGNDIVSWLWGGFSVS) are Mitochondrial intermembrane-facing. A helical transmembrane segment spans residues 173 to 204 (NPTIQRFFALHYLVPFIIAAMVIMHLMALHIH). Heme b-binding residues include histidine 183 and histidine 197. Histidine 202 serves as a coordination point for a ubiquinone. Over 205–223 (GSSNPLGITGNLDRIPMHS) the chain is Mitochondrial matrix. The helical transmembrane segment at 224–246 (YFIFKDLVTVFLFMLILALFVFY) threads the bilayer. Residues 247–287 (SPNTLGHPDNYIPGNPLVTPASIVPEWYLLPFYAILRSIPD) are Mitochondrial intermembrane-facing. The chain crosses the membrane as a helical span at residues 288–308 (KLLGVITMFAAILVLLVLPFT). Residues 309-319 (DRSVVRGNTFK) lie on the Mitochondrial matrix side of the membrane. Residues 320–340 (VLSKFFFFIFVFNFVLLGQIG) traverse the membrane as a helical segment. The Mitochondrial intermembrane portion of the chain corresponds to 341 to 347 (ACHVEVP). The helical transmembrane segment at 348–364 (YVLMGQIATFIYFAYFL) threads the bilayer. The Mitochondrial matrix segment spans residues 365–385 (IIVPVISTIENVLFYIGRVNK).

This sequence belongs to the cytochrome b family. Component of the ubiquinol-cytochrome c oxidoreductase (cytochrome b-c1 complex, complex III, CIII), a multisubunit enzyme composed of 10 subunits. The complex is composed of 3 respiratory subunits cytochrome b (COB), cytochrome c1 (CYT1) and Rieske protein (RIP1), 2 core protein subunits COR1 and QCR2, and 5 low-molecular weight protein subunits QCR6, QCR7, QCR8, QCR9 and QCR10. The complex exists as an obligatory dimer and forms supercomplexes (SCs) in the inner mitochondrial membrane with a monomer or a dimer of cytochrome c oxidase (complex IV, CIV), resulting in 2 different assemblies (supercomplexes III(2)IV and III(2)IV(2)). Heme b serves as cofactor.

The protein localises to the mitochondrion inner membrane. It carries out the reaction a quinol + 2 Fe(III)-[cytochrome c](out) = a quinone + 2 Fe(II)-[cytochrome c](out) + 2 H(+)(out). In terms of biological role, component of the ubiquinol-cytochrome c oxidoreductase, a multisubunit transmembrane complex that is part of the mitochondrial electron transport chain which drives oxidative phosphorylation. The respiratory chain contains 3 multisubunit complexes succinate dehydrogenase (complex II, CII), ubiquinol-cytochrome c oxidoreductase (cytochrome b-c1 complex, complex III, CIII) and cytochrome c oxidase (complex IV, CIV), that cooperate to transfer electrons derived from NADH and succinate to molecular oxygen, creating an electrochemical gradient over the inner membrane that drives transmembrane transport and the ATP synthase. The cytochrome b-c1 complex catalyzes electron transfer from ubiquinol to cytochrome c, linking this redox reaction to translocation of protons across the mitochondrial inner membrane, with protons being carried across the membrane as hydrogens on the quinol. In the process called Q cycle, 2 protons are consumed from the matrix, 4 protons are released into the intermembrane space and 2 electrons are passed to cytochrome c. Cytochrome b is a catalytic core subunit containing 2 b-type hemes BL and BH topographically segregated in the quinone reduction (Qi) and quinol oxidation (Q0) sites on opposite sides of the membrane. In Saccharomyces cerevisiae (strain ATCC 204508 / S288c) (Baker's yeast), this protein is Cytochrome b (COB).